A 54-amino-acid chain; its full sequence is uncharacterized protein (54 aa).

Positions 1–28 (MDRKKDEIQRKYREQMREKKEREKEDGS) are enriched in basic and acidic residues. A disordered region spans residues 1 to 29 (MDRKKDEIQRKYREQMREKKEREKEDGSS). Residues 31–51 (TFEIVVVLAIIILMFFFNSVF) traverse the membrane as a helical segment.

It is found in the cell membrane. This is an uncharacterized protein from Bacillus subtilis (strain 168).